We begin with the raw amino-acid sequence, 540 residues long: Phosphoenolpyruvate carboxykinase (ATP) (540 aa).

Position 65 (R65) interacts with substrate. K87 is subject to N6-acetyllysine. The substrate site is built by Y207 and K213. Residues K213, H232, and G248–T256 contribute to the ATP site. Positions 213 and 232 each coordinate Mn(2+). Residue D269 coordinates Mn(2+). Residues E297, R333, R449–I450, and T455 each bind ATP. Position 333 (R333) interacts with substrate. K523 is modified (N6-acetyllysine).

Belongs to the phosphoenolpyruvate carboxykinase (ATP) family. Monomer. Requires Mn(2+) as cofactor.

It localises to the cytoplasm. The catalysed reaction is oxaloacetate + ATP = phosphoenolpyruvate + ADP + CO2. The protein operates within carbohydrate biosynthesis; gluconeogenesis. Functionally, involved in the gluconeogenesis. Catalyzes the conversion of oxaloacetate (OAA) to phosphoenolpyruvate (PEP) through direct phosphoryl transfer between the nucleoside triphosphate and OAA. This Shigella flexneri serotype 5b (strain 8401) protein is Phosphoenolpyruvate carboxykinase (ATP).